We begin with the raw amino-acid sequence, 201 residues long: Potassium-transporting ATPase KdpC subunit (201 aa).

Residues 12–34 traverse the membrane as a helical segment; that stretch reads LLALTMITGLAYPLAVTGLATVL. Residues 73–102 form a disordered region; that stretch reads TVAPDPADSSKTVSAPYNAANSGGSNLGPT. The span at 81–101 shows a compositional bias: polar residues; that stretch reads SSKTVSAPYNAANSGGSNLGP.

This sequence belongs to the KdpC family. The system is composed of three essential subunits: KdpA, KdpB and KdpC.

It is found in the cell inner membrane. Part of the high-affinity ATP-driven potassium transport (or Kdp) system, which catalyzes the hydrolysis of ATP coupled with the electrogenic transport of potassium into the cytoplasm. This subunit acts as a catalytic chaperone that increases the ATP-binding affinity of the ATP-hydrolyzing subunit KdpB by the formation of a transient KdpB/KdpC/ATP ternary complex. The protein is Potassium-transporting ATPase KdpC subunit of Rhodopseudomonas palustris (strain ATCC BAA-98 / CGA009).